The primary structure comprises 299 residues: Coenzyme PQQ synthesis protein B (299 aa).

This sequence belongs to the PqqB family.

The protein operates within cofactor biosynthesis; pyrroloquinoline quinone biosynthesis. In terms of biological role, may be involved in the transport of PQQ or its precursor to the periplasm. This is Coenzyme PQQ synthesis protein B from Methylorubrum populi (strain ATCC BAA-705 / NCIMB 13946 / BJ001) (Methylobacterium populi).